The sequence spans 141 residues: Cholinesterase (141 aa).

N-linked (GlcNAc...) asparagine glycosylation is present at asparagine 39. 49–50 serves as a coordination point for substrate; that stretch reads GS. Serine 131 functions as the Acyl-ester intermediate in the catalytic mechanism. At serine 131 the chain carries Phosphoserine.

This sequence belongs to the type-B carboxylesterase/lipase family. In terms of assembly, homotetramer; disulfide-linked. Dimer of dimers. As to expression, present in most cells except erythrocytes.

The protein resides in the secreted. The enzyme catalyses an acylcholine + H2O = a carboxylate + choline + H(+). Its function is as follows. Esterase with broad substrate specificity. Contributes to the inactivation of the neurotransmitter acetylcholine. Can degrade neurotoxic organophosphate esters. The polypeptide is Cholinesterase (BCHE) (Ovis aries (Sheep)).